The chain runs to 154 residues: S-protein homolog 12 (154 aa).

The first 30 residues, M1–G30, serve as a signal peptide directing secretion.

This sequence belongs to the plant self-incompatibility (S1) protein family.

The protein resides in the secreted. The chain is S-protein homolog 12 from Arabidopsis thaliana (Mouse-ear cress).